The chain runs to 447 residues: GTPase Der (447 aa).

EngA-type G domains follow at residues Gln-4 to Glu-165 and Leu-180 to Asn-357. Residues Gly-10–Ser-17, Asp-57–Leu-61, Asn-119–Glu-122, Gly-186–Ser-193, Asp-233–Leu-237, and Asn-298–Asp-301 each bind GTP. Residues Lys-358 to Lys-443 form the KH-like domain.

The protein belongs to the TRAFAC class TrmE-Era-EngA-EngB-Septin-like GTPase superfamily. EngA (Der) GTPase family. Associates with the 50S ribosomal subunit.

Its function is as follows. GTPase that plays an essential role in the late steps of ribosome biogenesis. The sequence is that of GTPase Der from Rickettsia conorii (strain ATCC VR-613 / Malish 7).